Here is a 405-residue protein sequence, read N- to C-terminus: Serpin H1 (405 aa).

The N-terminal stretch at 1 to 15 (MQIFLVLALCGLAAA) is a signal peptide. Asparagine 107 and asparagine 112 each carry an N-linked (GlcNAc...) asparagine glycan. The Prevents secretion from ER motif lies at 402–405 (RDEL).

This sequence belongs to the serpin family.

The protein resides in the endoplasmic reticulum lumen. In terms of biological role, binds specifically to collagen. Could be involved as a chaperone in the biosynthetic pathway of collagen. The sequence is that of Serpin H1 (SERPINH1) from Gallus gallus (Chicken).